The primary structure comprises 235 residues: Cobalt transport protein CbiM (235 aa).

An N-terminal signal peptide occupies residues 1 to 33; the sequence is MRYLKFFLLLVFLVPSFGFSMHIMEGFLPPTHA. Transmembrane regions (helical) follow at residues 34–51, 63–83, 95–115, 118–138, 156–176, and 199–219; these read LIWY…LFTI, MLLA…IPSV, LGAI…VLLF, LLLA…MAIV, NIAV…TTSF, and IFAI…VVVI.

This sequence belongs to the CbiM family. In terms of assembly, forms an energy-coupling factor (ECF) transporter complex composed of an ATP-binding protein (A component, CbiO), a transmembrane protein (T component, CbiQ) and 2 possible substrate-capture proteins (S components, CbiM and CbiN) of unknown stoichimetry.

It is found in the cell inner membrane. It functions in the pathway cofactor biosynthesis; adenosylcobalamin biosynthesis. In terms of biological role, part of the energy-coupling factor (ECF) transporter complex CbiMNOQ involved in cobalt import. This is Cobalt transport protein CbiM from Thermosipho melanesiensis (strain DSM 12029 / CIP 104789 / BI429).